We begin with the raw amino-acid sequence, 339 residues long: Cobalt-precorrin-5B C(1)-methyltransferase (339 aa).

It belongs to the CbiD family.

It catalyses the reaction Co-precorrin-5B + S-adenosyl-L-methionine = Co-precorrin-6A + S-adenosyl-L-homocysteine. Its pathway is cofactor biosynthesis; adenosylcobalamin biosynthesis; cob(II)yrinate a,c-diamide from sirohydrochlorin (anaerobic route): step 6/10. Its function is as follows. Catalyzes the methylation of C-1 in cobalt-precorrin-5B to form cobalt-precorrin-6A. This chain is Cobalt-precorrin-5B C(1)-methyltransferase, found in Methanosarcina acetivorans (strain ATCC 35395 / DSM 2834 / JCM 12185 / C2A).